The sequence spans 345 residues: tRNA N6-adenosine threonylcarbamoyltransferase (345 aa).

Residues histidine 111 and histidine 115 each coordinate Fe cation. Substrate-binding positions include 134–138 (LVSGG), aspartate 167, glycine 180, and asparagine 276. Aspartate 304 contributes to the Fe cation binding site.

It belongs to the KAE1 / TsaD family. It depends on Fe(2+) as a cofactor.

It is found in the cytoplasm. It catalyses the reaction L-threonylcarbamoyladenylate + adenosine(37) in tRNA = N(6)-L-threonylcarbamoyladenosine(37) in tRNA + AMP + H(+). In terms of biological role, required for the formation of a threonylcarbamoyl group on adenosine at position 37 (t(6)A37) in tRNAs that read codons beginning with adenine. Is involved in the transfer of the threonylcarbamoyl moiety of threonylcarbamoyl-AMP (TC-AMP) to the N6 group of A37, together with TsaE and TsaB. TsaD likely plays a direct catalytic role in this reaction. The chain is tRNA N6-adenosine threonylcarbamoyltransferase from Bordetella avium (strain 197N).